Here is a 601-residue protein sequence, read N- to C-terminus: Elongation factor 4 (601 aa).

The 182-residue stretch at 8-189 (EQIRNFGIIA…LIVRKAPPPK (182 aa)) folds into the tr-type G domain. 20 to 25 (DHGKST) contributes to the GTP binding site.

This sequence belongs to the TRAFAC class translation factor GTPase superfamily. Classic translation factor GTPase family. LepA subfamily.

The protein localises to the cell membrane. It carries out the reaction GTP + H2O = GDP + phosphate + H(+). In terms of biological role, required for accurate and efficient protein synthesis under certain stress conditions. May act as a fidelity factor of the translation reaction, by catalyzing a one-codon backward translocation of tRNAs on improperly translocated ribosomes. Back-translocation proceeds from a post-translocation (POST) complex to a pre-translocation (PRE) complex, thus giving elongation factor G a second chance to translocate the tRNAs correctly. Binds to ribosomes in a GTP-dependent manner. This is Elongation factor 4 from Tropheryma whipplei (strain TW08/27) (Whipple's bacillus).